The chain runs to 387 residues: UDP-N-acetylglucosamine--N-acetylmuramyl-(pentapeptide) pyrophosphoryl-undecaprenol N-acetylglucosamine transferase (387 aa).

Residues 26-28 (TGG), Asn-137, Arg-177, Ser-205, and Gln-306 each bind UDP-N-acetyl-alpha-D-glucosamine.

It belongs to the glycosyltransferase 28 family. MurG subfamily.

Its subcellular location is the cell inner membrane. It catalyses the reaction di-trans,octa-cis-undecaprenyl diphospho-N-acetyl-alpha-D-muramoyl-L-alanyl-D-glutamyl-meso-2,6-diaminopimeloyl-D-alanyl-D-alanine + UDP-N-acetyl-alpha-D-glucosamine = di-trans,octa-cis-undecaprenyl diphospho-[N-acetyl-alpha-D-glucosaminyl-(1-&gt;4)]-N-acetyl-alpha-D-muramoyl-L-alanyl-D-glutamyl-meso-2,6-diaminopimeloyl-D-alanyl-D-alanine + UDP + H(+). It participates in cell wall biogenesis; peptidoglycan biosynthesis. Functionally, cell wall formation. Catalyzes the transfer of a GlcNAc subunit on undecaprenyl-pyrophosphoryl-MurNAc-pentapeptide (lipid intermediate I) to form undecaprenyl-pyrophosphoryl-MurNAc-(pentapeptide)GlcNAc (lipid intermediate II). The chain is UDP-N-acetylglucosamine--N-acetylmuramyl-(pentapeptide) pyrophosphoryl-undecaprenol N-acetylglucosamine transferase from Rhodospirillum rubrum (strain ATCC 11170 / ATH 1.1.1 / DSM 467 / LMG 4362 / NCIMB 8255 / S1).